The sequence spans 463 residues: Glutamate--tRNA ligase 1 (463 aa).

A 'HIGH' region motif is present at residues proline 10 to glycine 20. The short motif at lysine 238–arginine 242 is the 'KMSKS' region element. Lysine 241 serves as a coordination point for ATP.

This sequence belongs to the class-I aminoacyl-tRNA synthetase family. Glutamate--tRNA ligase type 1 subfamily. Monomer.

The protein resides in the cytoplasm. The catalysed reaction is tRNA(Glu) + L-glutamate + ATP = L-glutamyl-tRNA(Glu) + AMP + diphosphate. Catalyzes the attachment of glutamate to tRNA(Glu) in a two-step reaction: glutamate is first activated by ATP to form Glu-AMP and then transferred to the acceptor end of tRNA(Glu). This is Glutamate--tRNA ligase 1 from Helicobacter pylori (strain P12).